We begin with the raw amino-acid sequence, 340 residues long: Mitochondrial glycine transporter (340 aa).

3 Solcar repeats span residues 23–108 (PKTL…ARNG), 128–218 (LSPF…FKND), and 237–325 (RSTI…LIKS). The next 6 helical transmembrane spans lie at 29–54 (LISG…TRLQ), 83–109 (GALP…RNGI), 134–159 (LATG…TRYE), 193–216 (GSFA…ELFK), 241–267 (INTS…KTRL), and 300–318 (GLSL…SWCI).

This sequence belongs to the mitochondrial carrier (TC 2.A.29) family. SLC25A38 subfamily.

Its subcellular location is the mitochondrion inner membrane. It catalyses the reaction glycine(in) = glycine(out). Mitochondrial glycine transporter that imports glycine into the mitochondrial matrix. Plays an important role in providing glycine for the first enzymatic step in heme biosynthesis, the condensation of glycine with succinyl-CoA to produce 5-aminolevulinate (ALA) in the mitochondrial matrix. This Debaryomyces hansenii (strain ATCC 36239 / CBS 767 / BCRC 21394 / JCM 1990 / NBRC 0083 / IGC 2968) (Yeast) protein is Mitochondrial glycine transporter.